We begin with the raw amino-acid sequence, 508 residues long: NADH-quinone oxidoreductase subunit N 2 (508 aa).

A run of 14 helical transmembrane segments spans residues 14 to 34 (SYVA…VIVL), 43 to 63 (SLVW…WYTA), 90 to 110 (FTFF…LLSA), 119 to 139 (GAHM…MFMV), 144 to 164 (LLTI…LAGI), 179 to 199 (FLTG…IYGV), 223 to 243 (GPAL…GFGF), 275 to 295 (GAAM…APFT), 298 to 318 (WALI…LVAL), 327 to 347 (MAYS…ASGL), 353 to 373 (ISSV…IFAV), 400 to 420 (AWAL…VGFL), 433 to 455 (GYLW…YYRV), and 473 to 493 (TGIS…TIFA).

It belongs to the complex I subunit 2 family. NDH-1 is composed of 14 different subunits. Subunits NuoA, H, J, K, L, M, N constitute the membrane sector of the complex.

It localises to the cell membrane. The enzyme catalyses a quinone + NADH + 5 H(+)(in) = a quinol + NAD(+) + 4 H(+)(out). NDH-1 shuttles electrons from NADH, via FMN and iron-sulfur (Fe-S) centers, to quinones in the respiratory chain. The immediate electron acceptor for the enzyme in this species is believed to be a menaquinone. Couples the redox reaction to proton translocation (for every two electrons transferred, four hydrogen ions are translocated across the cytoplasmic membrane), and thus conserves the redox energy in a proton gradient. This Symbiobacterium thermophilum (strain DSM 24528 / JCM 14929 / IAM 14863 / T) protein is NADH-quinone oxidoreductase subunit N 2.